The sequence spans 312 residues: Acetaldehyde dehydrogenase (312 aa).

Residue S12–I15 coordinates NAD(+). Residue C132 is the Acyl-thioester intermediate of the active site. NAD(+) contacts are provided by residues S163–N171 and N290.

The protein belongs to the acetaldehyde dehydrogenase family. As to quaternary structure, heterotetramer composed of two DmpG (aldolase) and two DmpF (dehydrogenase) subunits, which allows a direct channeling of acetaldehyde between the two active sites.

It catalyses the reaction acetaldehyde + NAD(+) + CoA = acetyl-CoA + NADH + H(+). It participates in aromatic compound metabolism; phenol degradation. Is not activated by Mn(2+), Mg(2+), Ca(2+), Zn(2+) or Co(2+). In terms of biological role, catalyzes the conversion of acetaldehyde to acetyl-CoA, using NAD(+) and coenzyme A. Can also act on propanal and butanal to form propanoyl-CoA and butanoyl-CoA, respectively. Is the final enzyme in the meta-cleavage pathway for the degradation of aromatic compounds such as phenols, cresols and catechols. NADP(+) can replace NAD(+) but the rate of reaction is much slower. This Pseudomonas sp. (strain CF600) protein is Acetaldehyde dehydrogenase (dmpF).